The primary structure comprises 187 residues: Ribosome-recycling factor (187 aa).

This sequence belongs to the RRF family.

It localises to the cytoplasm. Its function is as follows. Responsible for the release of ribosomes from messenger RNA at the termination of protein biosynthesis. May increase the efficiency of translation by recycling ribosomes from one round of translation to another. The chain is Ribosome-recycling factor from Nitrobacter winogradskyi (strain ATCC 25391 / DSM 10237 / CIP 104748 / NCIMB 11846 / Nb-255).